A 258-amino-acid polypeptide reads, in one-letter code: Short-chain dehydrogenase reductase 3c (258 aa).

12–36 is an NAD(+) binding site; that stretch reads IITGGASGIGADAARLFTDHGAKVV. Serine 144 lines the substrate pocket. Tyrosine 156 functions as the Proton acceptor in the catalytic mechanism.

This sequence belongs to the short-chain dehydrogenases/reductases (SDR) family.

This Arabidopsis thaliana (Mouse-ear cress) protein is Short-chain dehydrogenase reductase 3c (SDR3c).